Here is a 1584-residue protein sequence, read N- to C-terminus: Adhesion G protein-coupled receptor B1 (1584 aa).

The first 30 residues, 1–30 (MRGQAAAPGPVWILAPLLLLLLLLGRRARA), serve as a signal peptide directing secretion. Residues 31 to 948 (AAGADAGPGP…ANMEKATLPS (918 aa)) lie on the Extracellular side of the membrane. Asn-64 carries N-linked (GlcNAc...) asparagine glycosylation. The tract at residues 146 to 167 (RRQQPPQHDGLRPRAGPPGPTD) is disordered. The TSP type-1 1 domain occupies 261-315 (TGGWKLWSLWGECTRDCGGGLQTRTRTCLPAPGVEGGGCEGVLEEGRQCNREACG). 3 disulfide bridges follow: Cys-273–Cys-309, Cys-277–Cys-314, and Cys-288–Cys-299. Residues 313–335 (ACGPAGRTSSRSQSLRSTDARRR) form a disordered region. The segment covering 319–329 (RTSSRSQSLRS) has biased composition (low complexity). 4 consecutive TSP type-1 domains span residues 354–407 (DPAA…AVCP), 409–462 (HGAW…ALCP), 467–520 (DGNW…QQCP), and 522–575 (DGKW…QRCP). Disulfide bonds link Cys-366–Cys-400, Cys-370–Cys-406, Cys-381–Cys-390, Cys-421–Cys-456, Cys-425–Cys-461, Cys-436–Cys-446, Cys-479–Cys-514, Cys-483–Cys-519, Cys-494–Cys-504, Cys-534–Cys-569, Cys-538–Cys-574, Cys-549–Cys-559, Cys-581–Cys-616, and Cys-604–Cys-634. The N-linked (GlcNAc...) asparagine glycan is linked to Asn-401. Asn-607 carries N-linked (GlcNAc...) asparagine glycosylation. A Phosphothreonine modification is found at Thr-609. Asn-692, Asn-844, Asn-877, and Asn-881 each carry an N-linked (GlcNAc...) asparagine glycan. In terms of domain architecture, GAIN-B spans 760–939 (RDAYQVTDNL…AILAQLSADA (180 aa)). Intrachain disulfides connect Cys-884–Cys-921 and Cys-909–Cys-923. Residues 884–939 (CILWDETDVPSSSAPPQLGPWSWRGCRTVPLDALRTRCLCDRLSTFAILAQLSADA) form a GPS region. The N-terminal stalk following vasculostatin-120 cleavage which is not required for signaling activity stretch occupies residues 927-943 (STFAILAQLSADANMEK). The chain crosses the membrane as a helical span at residues 949–969 (VTLIVGCGVSSLTLLMLVIIY). Residues 970-980 (VSVWRYIRSER) are Cytoplasmic-facing. The chain crosses the membrane as a helical span at residues 981-1001 (SVILINFCLSIISSNALILIG). Topologically, residues 1002–1008 (QTQTRNK) are extracellular. Residues 1009-1029 (VVCTLVAAFLHFFFLSSFCWV) form a helical membrane-spanning segment. At 1030-1052 (LTEAWQSYMAVTGHLRNRLIRKR) the chain is on the cytoplasmic side. The chain crosses the membrane as a helical span at residues 1053–1073 (FLCLGWGLPALVVAISVGFTK). At 1074 to 1093 (AKGYSTMNYCWLSLEGGLLY) the chain is on the extracellular side. Residues 1094 to 1114 (AFVGPAAAVVLVNMVIGILVF) traverse the membrane as a helical segment. At 1115–1136 (NKLVSKDGITDKKLKERAGASL) the chain is on the cytoplasmic side. Residues 1137–1157 (WSSCVVLPLLALTWMSAVLAV) traverse the membrane as a helical segment. Over 1158-1166 (TDRRSALFQ) the chain is Extracellular. A helical membrane pass occupies residues 1167 to 1187 (ILFAVFDSLEGFVIVMVHCIL). Residues 1188–1584 (RREVQDAVKC…QDIIDLQTEV (397 aa)) lie on the Cytoplasmic side of the membrane. The tract at residues 1365 to 1584 (YSIHIDQMPQ…QDIIDLQTEV (220 aa)) is involved in interaction with MAGI1. 2 disordered regions span residues 1385 to 1475 (EASL…RRKS) and 1501 to 1548 (RKLQ…KKEL). Pro residues predominate over residues 1391–1439 (RSPPSRQPPSGGPPEAPPAQPPPPPPPPPPPPQQPLPPPPNLEPAPPSL). Polar residues predominate over residues 1453 to 1469 (TGPSTKNENVATLSVSS). A Phosphoserine modification is found at Ser-1469. Residues 1501-1522 (RKLQHAAEKDKEVLGPDSKPEK) are compositionally biased toward basic and acidic residues. Residues 1581–1584 (QTEV) form an indispensable for interaction with MAGI1 region.

Belongs to the G-protein coupled receptor 2 family. LN-TM7 subfamily. As to quaternary structure, interacts with ELMO1 and DOCK. When bound to ELMO1 and DOCK1, acts as a module to promote apoptotic cell engulfment. Interacts with MDM2; the interaction results in inhibition of MDM2-mediated ubiquitination and degradation of DLG4/PSD95. Interacts with PARD3 and TIAM1; the interaction is required for correct dendritic. localization of PARD3 and TIAM1 and for dendritic spine formation. Interacts with MAGI1. Interacts with MAGI3. Interacts with BAIAP2. Interacts with PHYHIP. Interacts with DLG4 (via PDZ domain). Vasculostatin-120: Interacts with CD36. Vasculostatin-120: Interacts with ARRB2. Interacts with BAIAP3; this interaction is direct. Proteolytically cleaved to produce vasculostatin-40 and vasculostatin-120. Vasculostatin-40 is the major form and is produced through proteolytic cleavage by MMP14 between residues 321 and 329 with cleavage likely to be between Ser-326 and Leu-327. Post-translationally, ubiquitinated. As to expression, expressed in brain (at protein level). Expressed on mononuclear phagocytes and monocyte-derived macrophages in the gastric mucosa (at protein level). Expressed in normal pancreatic tissue but not in pancreatic tumor tissue. Reduced or no expression is observed in some glioblastomas.

The protein localises to the cell membrane. It is found in the cell projection. Its subcellular location is the phagocytic cup. It localises to the cell junction. The protein resides in the focal adhesion. The protein localises to the dendritic spine. It is found in the postsynaptic density. Its subcellular location is the secreted. Functionally, phosphatidylserine receptor which enhances the engulfment of apoptotic cells. Also mediates the binding and engulfment of Gram-negative bacteria. Stimulates production of reactive oxygen species by macrophages in response to Gram-negative bacteria, resulting in enhanced microbicidal macrophage activity. In the gastric mucosa, required for recognition and engulfment of apoptotic gastric epithelial cells. Promotes myoblast fusion. Activates the Rho pathway in a G-protein-dependent manner. Inhibits MDM2-mediated ubiquitination and degradation of DLG4/PSD95, promoting DLG4 stability and regulating synaptic plasticity. Required for the formation of dendritic spines by ensuring the correct localization of PARD3 and TIAM1. Potent inhibitor of angiogenesis in brain and may play a significant role as a mediator of the p53/TP53 signal in suppression of glioblastoma. Its function is as follows. Inhibits angiogenesis in a CD36-dependent manner. In terms of biological role, inhibits angiogenesis. The sequence is that of Adhesion G protein-coupled receptor B1 from Homo sapiens (Human).